Reading from the N-terminus, the 178-residue chain is Large ribosomal subunit protein uL5 (178 aa).

This sequence belongs to the universal ribosomal protein uL5 family. As to quaternary structure, part of the 50S ribosomal subunit; part of the 5S rRNA/L5/L18/L25 subcomplex. Contacts the 5S rRNA and the P site tRNA. Forms a bridge to the 30S subunit in the 70S ribosome.

This is one of the proteins that bind and probably mediate the attachment of the 5S RNA into the large ribosomal subunit, where it forms part of the central protuberance. In the 70S ribosome it contacts protein S13 of the 30S subunit (bridge B1b), connecting the 2 subunits; this bridge is implicated in subunit movement. Contacts the P site tRNA; the 5S rRNA and some of its associated proteins might help stabilize positioning of ribosome-bound tRNAs. The chain is Large ribosomal subunit protein uL5 from Wigglesworthia glossinidia brevipalpis.